The primary structure comprises 466 residues: MRFKISLTTRLSLIFSAVMLTVWWLSSFILISTLNDYFDNQDRDFLTGKLQLTEEFLKTETFRNKTDIKSLSEKINDAMVGHNGLFISIKNMENEKIVELYAKNSVVPAVLLNKSGDILDYMIQTEENNTVYRSISRRVAVTPEQGKSKHVIITVATDTGYHTLLMDKLSTWLFWFNIGLVFISVFLGWLTTRIGLKPLREMTSLASSMTVHSLDQRLNPDLAPPEISETMQEFNNMFDRLEGAFRKLSDFSSDIAHELRTPVSNLMMQTQFALAKERDVSHYREILFANLEELKRLSRMTSDMLFLARSEHGLLRLDKHDVDLAAELNELRELFEPLADETGKTITVEGEGVVAGDSDMLRRAFSNLLSNAIKYSPDNTCTAIHLERDSDCVNVMITNTMSGQVPANLERLFDRFYRADSSRFYNTEGAGLGLSITRSIIHAHGGELSAEQQGREIVFKVRLLMD.

The Cytoplasmic portion of the chain corresponds to Met1 to Arg10. The chain crosses the membrane as a helical span at residues Leu11–Ile31. Residues Ser32–Thr171 are Periplasmic-facing. Residues Trp172–Thr192 form a helical membrane-spanning segment. Residues Arg193 to Arg246 form the HAMP domain. The Cytoplasmic portion of the chain corresponds to Arg193–Asp466. The Histidine kinase domain occupies Asp254–Asp466. Position 257 is a phosphohistidine; by autocatalysis (His257).

It localises to the cell inner membrane. The catalysed reaction is ATP + protein L-histidine = ADP + protein N-phospho-L-histidine.. Functionally, probable member of a two-component regulatory system PcoS/PcoR. May activate PcoR by phosphorylation. This chain is Probable sensor protein PcoS (pcoS), found in Escherichia coli.